Here is a 410-residue protein sequence, read N- to C-terminus: Heat stress transcription factor A-9 (410 aa).

Residues Met-1 to Lys-44 are disordered. Positions Val-20 to Gly-33 are enriched in gly residues. Residues Gly-171 to Arg-246 adopt a coiled-coil conformation. Residues Leu-179–Val-229 form a hydrophobic repeat HR-A/B region. A Nuclear localization signal motif is present at residues Ser-256–Arg-260. Residues Ala-279–Glu-290 carry the Nuclear export signal motif.

Belongs to the HSF family. Class A subfamily. Homotrimer. Exhibits temperature-dependent phosphorylation.

The protein resides in the cytoplasm. Its subcellular location is the nucleus. Its function is as follows. Transcriptional regulator that specifically binds DNA of heat shock promoter elements (HSE). The chain is Heat stress transcription factor A-9 (HSFA9) from Oryza sativa subsp. japonica (Rice).